Here is a 263-residue protein sequence, read N- to C-terminus: Putative replication protein PDa0002 (263 aa).

The sequence is that of Putative replication protein PDa0002 from Xylella fastidiosa (strain Temecula1 / ATCC 700964).